The primary structure comprises 445 residues: UDP-N-acetylmuramoylalanine--D-glutamate ligase (445 aa).

110–116 serves as a coordination point for ATP; sequence GSNGKTT.

Belongs to the MurCDEF family.

The protein localises to the cytoplasm. The enzyme catalyses UDP-N-acetyl-alpha-D-muramoyl-L-alanine + D-glutamate + ATP = UDP-N-acetyl-alpha-D-muramoyl-L-alanyl-D-glutamate + ADP + phosphate + H(+). It participates in cell wall biogenesis; peptidoglycan biosynthesis. In terms of biological role, cell wall formation. Catalyzes the addition of glutamate to the nucleotide precursor UDP-N-acetylmuramoyl-L-alanine (UMA). The polypeptide is UDP-N-acetylmuramoylalanine--D-glutamate ligase (Christiangramia forsetii (strain DSM 17595 / CGMCC 1.15422 / KT0803) (Gramella forsetii)).